Consider the following 88-residue polypeptide: Apolipoprotein C-I (88 aa).

An N-terminal signal peptide occupies residues 1–26 (MRLILSLPVLAVVLAMVLEGPAPAQA).

The protein belongs to the apolipoprotein C1 family.

It is found in the secreted. Its function is as follows. Inhibitor of lipoprotein binding to the low density lipoprotein (LDL) receptor, LDL receptor-related protein, and very low density lipoprotein (VLDL) receptor. Associates with high density lipoproteins (HDL) and the triacylglycerol-rich lipoproteins in the plasma and makes up about 10% of the protein of the VLDL and 2% of that of HDL. Appears to interfere directly with fatty acid uptake and is also the major plasma inhibitor of cholesteryl ester transfer protein (CETP). Binds free fatty acids and reduces their intracellular esterification. Modulates the interaction of APOE with beta-migrating VLDL and inhibits binding of beta-VLDL to the LDL receptor-related protein. This is Apolipoprotein C-I (APOC1) from Cynopterus brachyotis (Lesser short-nosed fruit bat).